A 290-amino-acid chain; its full sequence is Xylanase inhibitor protein 2 (290 aa).

The first 27 residues, 1–27, serve as a signal peptide directing secretion; that stretch reads MGLVHALLPFAAAAALLLLAAPPPATA. The 261-residue stretch at 30–290 folds into the GH18 domain; sequence PGLAVYWGRH…DKKANYTGEG (261 aa). A disulfide bond links C49 and C89. N112 carries an N-linked (GlcNAc...) asparagine glycan. C187 and C216 are disulfide-bonded. N285 carries an N-linked (GlcNAc...) asparagine glycan.

The protein belongs to the glycosyl hydrolase 18 family. Xylanase inhibitor subfamily. Binds to fungal GH10 xylanases.

The protein resides in the secreted. Its function is as follows. Fungal xylanase inhibitor. Possesses competitive inhibiting activity against several fungal endo-1,4-beta-D-xylanases belonging to glycoside hydrolase family 10 (GH10) and family 11 (GH11). May function in plant defense against secreted fungal pathogen xylanases. Is similar to class III chitinases, but does not exhibit chitinase activity. The polypeptide is Xylanase inhibitor protein 2 (Oryza sativa subsp. japonica (Rice)).